The chain runs to 89 residues: Small ribosomal subunit protein uS15 (89 aa).

The protein belongs to the universal ribosomal protein uS15 family. As to quaternary structure, part of the 30S ribosomal subunit. Forms a bridge to the 50S subunit in the 70S ribosome, contacting the 23S rRNA.

In terms of biological role, one of the primary rRNA binding proteins, it binds directly to 16S rRNA where it helps nucleate assembly of the platform of the 30S subunit by binding and bridging several RNA helices of the 16S rRNA. Forms an intersubunit bridge (bridge B4) with the 23S rRNA of the 50S subunit in the ribosome. The protein is Small ribosomal subunit protein uS15 of Kineococcus radiotolerans (strain ATCC BAA-149 / DSM 14245 / SRS30216).